Here is a 125-residue protein sequence, read N- to C-terminus: 17 kDa gas vesicle protein (125 aa).

The protein belongs to the gas vesicle GvpC family.

It is found in the gas vesicle. Its function is as follows. Gas vesicles (GV) are hollow, gas filled proteinaceous nanostructures. During planktonic growth they allow positioning of the organism at a favorable depth for light or nutrient acquisition. The sequence is that of 17 kDa gas vesicle protein from Dactylococcopsis salina (strain PCC 8305) (Myxobactron salinum).